Reading from the N-terminus, the 463-residue chain is Fumarate hydratase class II (463 aa).

Substrate contacts are provided by residues 97–99 (SGT), 128–131 (HPND), 138–140 (SSN), and threonine 186. The Proton donor/acceptor role is filled by histidine 187. The active site involves serine 317. Substrate is bound by residues serine 318 and 323–325 (KVN).

This sequence belongs to the class-II fumarase/aspartase family. Fumarase subfamily. Homotetramer.

The protein localises to the cytoplasm. It catalyses the reaction (S)-malate = fumarate + H2O. It participates in carbohydrate metabolism; tricarboxylic acid cycle; (S)-malate from fumarate: step 1/1. Functionally, involved in the TCA cycle. Catalyzes the stereospecific interconversion of fumarate to L-malate. This Helicobacter pylori (strain J99 / ATCC 700824) (Campylobacter pylori J99) protein is Fumarate hydratase class II.